Here is a 456-residue protein sequence, read N- to C-terminus: tRNA(Ile)-lysidine synthase (456 aa).

27-32 serves as a coordination point for ATP; the sequence is SGGVDS.

This sequence belongs to the tRNA(Ile)-lysidine synthase family.

The protein localises to the cytoplasm. The catalysed reaction is cytidine(34) in tRNA(Ile2) + L-lysine + ATP = lysidine(34) in tRNA(Ile2) + AMP + diphosphate + H(+). Its function is as follows. Ligates lysine onto the cytidine present at position 34 of the AUA codon-specific tRNA(Ile) that contains the anticodon CAU, in an ATP-dependent manner. Cytidine is converted to lysidine, thus changing the amino acid specificity of the tRNA from methionine to isoleucine. The protein is tRNA(Ile)-lysidine synthase of Vibrio atlanticus (strain LGP32) (Vibrio splendidus (strain Mel32)).